The following is a 501-amino-acid chain: Aldehyde dehydrogenase 1A1 (501 aa).

Ser2 is subject to N-acetylserine. An N6-acetyllysine mark is found at Lys91 and Lys128. Residues 167–170 (IPWN), 193–196 (KPAE), 226–227 (GP), and 246–247 (GS) each bind NAD(+). N6-acetyllysine is present on Lys252. Glu269 (proton acceptor) is an active-site residue. 269-271 (ELG) serves as a coordination point for NAD(+). Residue Cys303 is the Nucleophile of the active site. Residues 336–501 (LTPGVSQGPQ…VTIKISQKNS (166 aa)) are mediates interaction with PRMT3. At Thr337 the chain carries Phosphothreonine. 349-353 (EQYEK) serves as a coordination point for NAD(+). N6-acetyllysine occurs at positions 353 and 367. 400 to 402 (EIF) contributes to the NAD(+) binding site. Lys410 is modified (N6-acetyllysine). Position 413 is a phosphoserine (Ser413). N6-acetyllysine occurs at positions 419 and 495.

Belongs to the aldehyde dehydrogenase family. As to quaternary structure, homotetramer. Interacts with PRMT3; the interaction is direct, inhibits ALDH1A1 aldehyde dehydrogenase activity and is independent of the methyltransferase activity of PRMT3. Post-translationally, the N-terminus is blocked most probably by acetylation. In terms of tissue distribution, expressed in muscle, liver, small intestine, kidney, brain, lung, heart but not detected in erythrocytes (at protein level).

It is found in the cytoplasm. The protein resides in the cytosol. Its subcellular location is the cell projection. It localises to the axon. The enzyme catalyses an aldehyde + NAD(+) + H2O = a carboxylate + NADH + 2 H(+). It carries out the reaction all-trans-retinal + NAD(+) + H2O = all-trans-retinoate + NADH + 2 H(+). It catalyses the reaction 9-cis-retinal + NAD(+) + H2O = 9-cis-retinoate + NADH + 2 H(+). The catalysed reaction is 11-cis-retinal + NAD(+) + H2O = 11-cis-retinoate + NADH + 2 H(+). The enzyme catalyses 13-cis-retinal + NAD(+) + H2O = 13-cis-retinoate + NADH + 2 H(+). It carries out the reaction 3-deoxyglucosone + NAD(+) + H2O = 2-dehydro-3-deoxy-D-gluconate + NADH + 2 H(+). It catalyses the reaction (E)-4-hydroxynon-2-enal + NAD(+) + H2O = (E)-4-hydroxynon-2-enoate + NADH + 2 H(+). The catalysed reaction is malonaldehyde + NAD(+) + H2O = 3-oxopropanoate + NADH + 2 H(+). The enzyme catalyses hexanal + NAD(+) + H2O = hexanoate + NADH + 2 H(+). It carries out the reaction propanal + NAD(+) + H2O = propanoate + NADH + 2 H(+). It catalyses the reaction acetaldehyde + NAD(+) + H2O = acetate + NADH + 2 H(+). The catalysed reaction is benzaldehyde + NAD(+) + H2O = benzoate + NADH + 2 H(+). The enzyme catalyses 4-aminobutanal + NAD(+) + H2O = 4-aminobutanoate + NADH + 2 H(+). It participates in cofactor metabolism; retinol metabolism. Cytosolic dehydrogenase that catalyzes the irreversible oxidation of a wide range of aldehydes to their corresponding carboxylic acid. Functions downstream of retinol dehydrogenases and catalyzes the oxidation of retinaldehyde into retinoic acid, the second step in the oxidation of retinol/vitamin A into retinoic acid. This pathway is crucial to control the levels of retinol and retinoic acid, two important molecules which excess can be teratogenic and cytotoxic. Also oxidizes aldehydes resulting from lipid peroxidation like (E)-4-hydroxynon-2-enal/HNE, malonaldehyde and hexanal that form protein adducts and are highly cytotoxic. By participating for instance to the clearance of (E)-4-hydroxynon-2-enal/HNE in the lens epithelium prevents the formation of HNE-protein adducts and lens opacification. Also functions downstream of fructosamine-3-kinase in the fructosamine degradation pathway by catalyzing the oxidation of 3-deoxyglucosone, the carbohydrate product of fructosamine 3-phosphate decomposition, which is itself a potent glycating agent that may react with lysine and arginine side-chains of proteins. Also has an aminobutyraldehyde dehydrogenase activity and is probably part of an alternative pathway for the biosynthesis of GABA/4-aminobutanoate in midbrain, thereby playing a role in GABAergic synaptic transmission. This Bos taurus (Bovine) protein is Aldehyde dehydrogenase 1A1.